The primary structure comprises 707 residues: Mitochondrial disaggregase (707 aa).

The transit peptide at 1–36 directs the protein to the mitochondrion; that stretch reads MLGSLVLRRKALAPRLLLRLLRSPTLRGHGGASGRN. An autoinhibitory region spans residues 92–126; that stretch reads PGPEETLPGQDSWNGVPSRAGLGMCALAAALVVHC. 4 ANK repeats span residues 133-162, 166-195, 265-295, and 298-327; these read NKDA…DVNA, LGWT…DPNL, KGCT…PLQR, and MGHT…EKQR. 10 residues coordinate ATP: H346, I348, S383, G384, I385, G386, K387, T388, E455, and N496. The segment at 507-535 is regulatory; slows ATPase and disaggregase activities; it reads LQLRQEALEMSRNRIAENLGDVQISDKIT. R561 is a binding site for ATP. Position 589 is an N6-acetyllysine (K589). R620 serves as a coordination point for ATP.

The protein belongs to the ClpA/ClpB family. Homododecamer when substrate-bound; the homododecamer consists of 2 homohexamers stacked head-to-head via ANK repeat-mediated interactions. The active substrate-bound form is likely to exist in a dynamic equilibrium between homohexamers and homododecamers. Homotetradecamer in the unbound state which is remodeled upon substrate binding into the homododecamer. Interacts with PHB and PHB2. Interacts with MAVS; the interaction is enhanced by Sendai virus infection. Proteolytically cleaved by protease PARL. ATP-dependent protein disaggregase activity is stimulated by PARL-mediated cleavage of the N-terminal autoinhibitory peptide. As to expression, widely expressed (at protein level). Expressed in fetal, as well as in adult tissues, with highest levels in adult brain, including thalamus, hippocampus, occipital cortex and parietal cortex. Low expression in granulocytes.

The protein resides in the mitochondrion intermembrane space. The enzyme catalyses ATP + H2O = ADP + phosphate + H(+). Its activity is regulated as follows. Disaggregase activity is inhibited by ADP. Functionally, functions as a regulatory ATPase and participates in secretion/protein trafficking process. Has ATP-dependent protein disaggregase activity and is required to maintain the solubility of key mitochondrial proteins. Involved in mitochondrial-mediated antiviral innate immunity, activates RIG-I-mediated signal transduction and production of IFNB1 and pro-inflammatory cytokine IL6. Plays a role in granulocyte differentiation. The chain is Mitochondrial disaggregase from Homo sapiens (Human).